Consider the following 135-residue polypeptide: Histone H2A.4 (135 aa).

Belongs to the histone H2A family. In terms of assembly, the nucleosome is a histone octamer containing two molecules each of H2A, H2B, H3 and H4 assembled in one H3-H4 heterotetramer and two H2A-H2B heterodimers. The octamer wraps approximately 147 bp of DNA. As to expression, expressed preferentially in meristematic tissues of young seedlings, in stigma and ovary but not in pollen.

Its subcellular location is the nucleus. It localises to the chromosome. Functionally, core component of nucleosome. Nucleosomes wrap and compact DNA into chromatin, limiting DNA accessibility to the cellular machineries which require DNA as a template. Histones thereby play a central role in transcription regulation, DNA repair, DNA replication and chromosomal stability. DNA accessibility is regulated via a complex set of post-translational modifications of histones, also called histone code, and nucleosome remodeling. This is Histone H2A.4 (TH254) from Triticum aestivum (Wheat).